We begin with the raw amino-acid sequence, 492 residues long: Bifunctional purine biosynthesis protein PurH (492 aa).

An MGS-like domain is found at 1 to 144 (MKKAILSVSN…KNYKHVTTIV (144 aa)).

This sequence belongs to the PurH family.

It carries out the reaction (6R)-10-formyltetrahydrofolate + 5-amino-1-(5-phospho-beta-D-ribosyl)imidazole-4-carboxamide = 5-formamido-1-(5-phospho-D-ribosyl)imidazole-4-carboxamide + (6S)-5,6,7,8-tetrahydrofolate. The enzyme catalyses IMP + H2O = 5-formamido-1-(5-phospho-D-ribosyl)imidazole-4-carboxamide. It functions in the pathway purine metabolism; IMP biosynthesis via de novo pathway; 5-formamido-1-(5-phospho-D-ribosyl)imidazole-4-carboxamide from 5-amino-1-(5-phospho-D-ribosyl)imidazole-4-carboxamide (10-formyl THF route): step 1/1. The protein operates within purine metabolism; IMP biosynthesis via de novo pathway; IMP from 5-formamido-1-(5-phospho-D-ribosyl)imidazole-4-carboxamide: step 1/1. The polypeptide is Bifunctional purine biosynthesis protein PurH (Staphylococcus aureus (strain Newman)).